A 291-amino-acid chain; its full sequence is uncharacterized protein (291 aa).

In terms of domain architecture, PNPLA spans 5–196 (GVFSGGGVKG…LSNFPIWLFS (192 aa)). A GXGXXG motif is present at residues 9 to 14 (GGGVKG). The chain crosses the membrane as a helical span at residues 34-50 (VAGTSAGAIIAAFIASG). The short motif at 36 to 40 (GTSAG) is the GXSXG element. Serine 38 (nucleophile) is an active-site residue. The Proton acceptor role is filled by aspartate 183. The short motif at 183-185 (DGG) is the DGA/G element.

The protein resides in the cell membrane. Probable lipid hydrolase. This is an uncharacterized protein from Bacillus subtilis (strain 168).